Reading from the N-terminus, the 218-residue chain is Putative transposase InsD for insertion element IS2E (218 aa).

An Integrase catalytic domain is found at 23-206 (KPAVPPSKRA…SPREYLRQRA (184 aa)).

Functionally, involved in the transposition of the insertion sequence IS2. This Escherichia coli (strain K12) protein is Putative transposase InsD for insertion element IS2E (insD8).